Consider the following 325-residue polypeptide: Elongation factor P--(R)-beta-lysine ligase (325 aa).

76–78 (SPE) is a binding site for substrate. ATP-binding positions include 100–102 (RNE) and N109. Y118 is a substrate binding site. ATP is bound at residue 244–245 (EL). A substrate-binding site is contributed by E251. Residue G300 coordinates ATP.

It belongs to the class-II aminoacyl-tRNA synthetase family. EpmA subfamily. Homodimer.

The catalysed reaction is D-beta-lysine + L-lysyl-[protein] + ATP = N(6)-((3R)-3,6-diaminohexanoyl)-L-lysyl-[protein] + AMP + diphosphate + H(+). Its function is as follows. With EpmB is involved in the beta-lysylation step of the post-translational modification of translation elongation factor P (EF-P). Catalyzes the ATP-dependent activation of (R)-beta-lysine produced by EpmB, forming a lysyl-adenylate, from which the beta-lysyl moiety is then transferred to the epsilon-amino group of a conserved specific lysine residue in EF-P. This Proteus mirabilis (strain HI4320) protein is Elongation factor P--(R)-beta-lysine ligase.